Consider the following 57-residue polypeptide: Large ribosomal subunit protein bL32 (57 aa).

Positions 1 to 20 are enriched in basic residues; it reads MAVPKKKTSKGKRNQRHAVW. The interval 1–23 is disordered; that stretch reads MAVPKKKTSKGKRNQRHAVWKAK.

Belongs to the bacterial ribosomal protein bL32 family.

The protein is Large ribosomal subunit protein bL32 of Prochlorococcus marinus (strain SARG / CCMP1375 / SS120).